The chain runs to 263 residues: Endonuclease 8 (263 aa).

Catalysis depends on Pro2, which acts as the Schiff-base intermediate with DNA. The active-site Proton donor is Glu3. Lys53 (proton donor; for beta-elimination activity) is an active-site residue. DNA-binding residues include Gln70, Arg125, and Asn169. Residues 229-263 form an FPG-type zinc finger; it reads KLFHRDGEACERCGGIIEKTTLSSRPFYWCPHCQK. Catalysis depends on Arg253, which acts as the Proton donor; for delta-elimination activity.

This sequence belongs to the FPG family. Requires Zn(2+) as cofactor.

The catalysed reaction is 2'-deoxyribonucleotide-(2'-deoxyribose 5'-phosphate)-2'-deoxyribonucleotide-DNA = a 3'-end 2'-deoxyribonucleotide-(2,3-dehydro-2,3-deoxyribose 5'-phosphate)-DNA + a 5'-end 5'-phospho-2'-deoxyribonucleoside-DNA + H(+). Its function is as follows. Involved in base excision repair of DNA damaged by oxidation or by mutagenic agents. Acts as a DNA glycosylase that recognizes and removes damaged bases. Has a preference for oxidized pyrimidines, such as thymine glycol, 5,6-dihydrouracil and 5,6-dihydrothymine. Has AP (apurinic/apyrimidinic) lyase activity and introduces nicks in the DNA strand. Cleaves the DNA backbone by beta-delta elimination to generate a single-strand break at the site of the removed base with both 3'- and 5'-phosphates. This Salmonella typhimurium (strain SL1344) protein is Endonuclease 8.